The sequence spans 119 residues: Large ribosomal subunit protein bL20 (119 aa).

Belongs to the bacterial ribosomal protein bL20 family.

Its function is as follows. Binds directly to 23S ribosomal RNA and is necessary for the in vitro assembly process of the 50S ribosomal subunit. It is not involved in the protein synthesizing functions of that subunit. This Clostridium beijerinckii (strain ATCC 51743 / NCIMB 8052) (Clostridium acetobutylicum) protein is Large ribosomal subunit protein bL20.